Consider the following 23-residue polypeptide: VIPFVASVAAEMQHVYCAASRKC.

Cys-17 and Cys-23 are oxidised to a cystine.

It belongs to the frog skin active peptide (FSAP) family. Brevinin subfamily. In terms of tissue distribution, expressed by the skin glands.

The protein localises to the secreted. Its function is as follows. Shows antibacterial activity against representative Gram-negative and Gram-positive bacterial species, and a very high hemolytic activity. The polypeptide is Brevinin-1Eb (Pelophylax lessonae (Pool frog)).